A 278-amino-acid chain; its full sequence is Putative cysteine-rich repeat secretory protein 17 (278 aa).

The signal sequence occupies residues 1-32 (MYSLSSVSKHLILVHILALVATQLLLIRSVSS). Gnk2-homologous domains follow at residues 39–142 (YLNH…SIDN) and 148–265 (YGDS…LYPF).

Belongs to the cysteine-rich repeat secretory protein family.

It is found in the secreted. This Arabidopsis thaliana (Mouse-ear cress) protein is Putative cysteine-rich repeat secretory protein 17 (CRRSP17).